Reading from the N-terminus, the 864-residue chain is NT-3 growth factor receptor (864 aa).

Residues 1-31 (MDVSLCPAKCSFWRIFLLGSVWLDYVGSVLA) form the signal peptide. 2 disulfides stabilise this stretch: C32/C38 and C36/C45. The Extracellular segment spans residues 32–429 (CPANCVCSKT…TVTHKPEEDT (398 aa)). Residues N68, N72, and N79 are each glycosylated (N-linked (GlcNAc...) asparagine). LRR repeat units follow at residues 104-125 (GLQK…AFAK) and 128-149 (HLRY…LFQT). N-linked (GlcNAc...) asparagine glycans are attached at residues N133 and N163. The 50-residue stretch at 160–209 (NFFNCSCDIRWMQLWQEQGEARLDSQSLYCISADGSQLPLFRMNISQCDL) folds into the LRRCT domain. Intrachain disulfides connect C164/C189 and C166/C207. N203, N218, N232, N259, N267, N272, and N294 each carry an N-linked (GlcNAc...) asparagine glycan. 2 Ig-like C2-type domains span residues 210 to 300 (PEIS…VALT) and 309 to 382 (SLVE…IAKN). A disulfide bond links C231 and C284. C320 and C362 are joined by a disulfide. N375 and N388 each carry an N-linked (GlcNAc...) asparagine glycan. Residues 430-453 (FGVSIAVGLAAFACVLLVVLFIMI) traverse the membrane as a helical segment. At 454–864 (NKYGRRSKFG…ATPIYLDILG (411 aa)) the chain is on the cytoplasmic side. Position 493 is a phosphoserine (S493). Y516 bears the Phosphotyrosine; by autocatalysis mark. A Protein kinase domain is found at 538 to 853 (IVLKRELGEG…EIYKILHALG (316 aa)). ATP is bound by residues 544–552 (LGEGAFGKV) and K572. The active-site Proton acceptor is the D679. Residues Y705, Y709, Y710, and Y859 each carry the phosphotyrosine; by autocatalysis modification.

Belongs to the protein kinase superfamily. Tyr protein kinase family. Insulin receptor subfamily. In terms of assembly, exists in a dynamic equilibrium between monomeric (low affinity) and dimeric (high affinity) structures. Binds SH2B2. Interacts with SQSTM1 and KIDINS220. Interacts with PTPRS. Interacts with MAPK8IP3/JIP3. Ligand-mediated auto-phosphorylation. As to expression, widely expressed, mainly in the nervous tissue.

It is found in the membrane. It carries out the reaction L-tyrosyl-[protein] + ATP = O-phospho-L-tyrosyl-[protein] + ADP + H(+). Receptor tyrosine kinase involved in nervous system and probably heart development. Upon binding of its ligand NTF3/neurotrophin-3, NTRK3 autophosphorylates and activates different signaling pathways, including the phosphatidylinositol 3-kinase/AKT and the MAPK pathways, that control cell survival and differentiation. NTRK3 isoforms containing insertions within the kinase domain can autophosphorylate in response to NTF3/neurotrophin-3, but cannot mediate downstream phenotypic responses. The polypeptide is NT-3 growth factor receptor (Ntrk3) (Rattus norvegicus (Rat)).